Here is a 375-residue protein sequence, read N- to C-terminus: Dual-specificity RNA methyltransferase RlmN (375 aa).

The active-site Proton acceptor is the Glu98. The Radical SAM core domain maps to 106-346 (GGKRRTLCVS…VRTTRGDDID (241 aa)). Cys113 and Cys349 are oxidised to a cystine. Residues Cys120, Cys124, and Cys127 each contribute to the [4Fe-4S] cluster site. Residues 174 to 175 (GE), Ser206, 228 to 230 (SLH), and Asn306 each bind S-adenosyl-L-methionine. Cys349 serves as the catalytic S-methylcysteine intermediate.

This sequence belongs to the radical SAM superfamily. RlmN family. [4Fe-4S] cluster serves as cofactor.

The protein resides in the cytoplasm. It catalyses the reaction adenosine(2503) in 23S rRNA + 2 reduced [2Fe-2S]-[ferredoxin] + 2 S-adenosyl-L-methionine = 2-methyladenosine(2503) in 23S rRNA + 5'-deoxyadenosine + L-methionine + 2 oxidized [2Fe-2S]-[ferredoxin] + S-adenosyl-L-homocysteine. The catalysed reaction is adenosine(37) in tRNA + 2 reduced [2Fe-2S]-[ferredoxin] + 2 S-adenosyl-L-methionine = 2-methyladenosine(37) in tRNA + 5'-deoxyadenosine + L-methionine + 2 oxidized [2Fe-2S]-[ferredoxin] + S-adenosyl-L-homocysteine. In terms of biological role, specifically methylates position 2 of adenine 2503 in 23S rRNA and position 2 of adenine 37 in tRNAs. m2A2503 modification seems to play a crucial role in the proofreading step occurring at the peptidyl transferase center and thus would serve to optimize ribosomal fidelity. This is Dual-specificity RNA methyltransferase RlmN from Chromohalobacter salexigens (strain ATCC BAA-138 / DSM 3043 / CIP 106854 / NCIMB 13768 / 1H11).